The following is a 133-amino-acid chain: Hemoglobin subunit alpha-2 (133 aa).

Residues 1 to 133 (NVKAVWEHVK…VKNVLTSRYR (133 aa)) enclose the Globin domain. H50 contributes to the O2 binding site. Heme b is bound at residue H79.

It belongs to the globin family. Minor hemoglobin is a heterotetramer of two alpha-2 chains and two beta-2 chains. Red blood cells.

Its function is as follows. Involved in oxygen transport from the lung to the various peripheral tissues. The polypeptide is Hemoglobin subunit alpha-2 (Pleurodeles waltl (Iberian ribbed newt)).